The chain runs to 466 residues: Argininosuccinate lyase (466 aa).

2-(N(omega)-L-arginino)succinate contacts are provided by Ser-27, Asn-114, and Thr-159. The Proton acceptor role is filled by His-160. The Proton donor role is filled by Ser-281. Asn-289, Tyr-321, Gln-326, and Lys-329 together coordinate 2-(N(omega)-L-arginino)succinate.

It belongs to the lyase 1 family. Argininosuccinate lyase subfamily. Homotetramer. Eye lens.

It catalyses the reaction 2-(N(omega)-L-arginino)succinate = fumarate + L-arginine. Its pathway is amino-acid biosynthesis; L-arginine biosynthesis; L-arginine from L-ornithine and carbamoyl phosphate: step 3/3. Delta crystallin, the principal crystallin in embryonic lens, is found only in birds and reptiles. This protein may also function as an enzymatically active argininosuccinate lyase. The polypeptide is Argininosuccinate lyase (ASL2) (Gallus gallus (Chicken)).